We begin with the raw amino-acid sequence, 161 residues long: Nascent polypeptide-associated complex subunit beta (161 aa).

Disordered regions lie at residues 14 to 41 (LSANNKVGGTRRKLAKKSGTASANKDDS) and 125 to 161 (QNAQAAAPATEGHEAGEKKDNDIPELIEGQSFDADVE). Residues 37–102 (NKDDSKLQAQ…PQEKSLQDLF (66 aa)) form the NAC-A/B domain. Positions 125 to 134 (QNAQAAAPAT) are enriched in low complexity. A compositionally biased stretch (basic and acidic residues) spans 135–146 (EGHEAGEKKDND).

Belongs to the NAC-beta family. As to quaternary structure, part of the nascent polypeptide-associated complex (NAC), consisting of EGD2 and EGD1. NAC associates with ribosomes via EGD1.

Its subcellular location is the cytoplasm. It localises to the nucleus. Component of the nascent polypeptide-associated complex (NAC), a dynamic component of the ribosomal exit tunnel, protecting the emerging polypeptides from interaction with other cytoplasmic proteins to ensure appropriate nascent protein targeting. The NAC complex also promotes mitochondrial protein import by enhancing productive ribosome interactions with the outer mitochondrial membrane and blocks the inappropriate interaction of ribosomes translating non-secretory nascent polypeptides with translocation sites in the membrane of the endoplasmic reticulum. EGD1 may act as a transcription factor that exert a negative effect on the expression of several genes that are transcribed by RNA polymerase II. The polypeptide is Nascent polypeptide-associated complex subunit beta (EGD1) (Eremothecium gossypii (strain ATCC 10895 / CBS 109.51 / FGSC 9923 / NRRL Y-1056) (Yeast)).